Consider the following 336-residue polypeptide: Ketol-acid reductoisomerase (NADP(+)) (336 aa).

Positions 1-182 constitute a KARI N-terminal Rossmann domain; it reads MAVIYYDKDA…GVTRAGVIET (182 aa). Residues 25 to 28, R48, S51, S53, and 83 to 86 contribute to the NADP(+) site; these read FGSQ and DEHQ. H108 is a catalytic residue. Residue G134 participates in NADP(+) binding. The KARI C-terminal knotted domain occupies 183–328; the sequence is TFKEETETDL…KELRKMMPWL (146 aa). Mg(2+) is bound by residues D191, E195, E227, and E231. Residue S252 coordinates substrate.

This sequence belongs to the ketol-acid reductoisomerase family. It depends on Mg(2+) as a cofactor.

The catalysed reaction is (2R)-2,3-dihydroxy-3-methylbutanoate + NADP(+) = (2S)-2-acetolactate + NADPH + H(+). The enzyme catalyses (2R,3R)-2,3-dihydroxy-3-methylpentanoate + NADP(+) = (S)-2-ethyl-2-hydroxy-3-oxobutanoate + NADPH + H(+). Its pathway is amino-acid biosynthesis; L-isoleucine biosynthesis; L-isoleucine from 2-oxobutanoate: step 2/4. The protein operates within amino-acid biosynthesis; L-valine biosynthesis; L-valine from pyruvate: step 2/4. Functionally, involved in the biosynthesis of branched-chain amino acids (BCAA). Catalyzes an alkyl-migration followed by a ketol-acid reduction of (S)-2-acetolactate (S2AL) to yield (R)-2,3-dihydroxy-isovalerate. In the isomerase reaction, S2AL is rearranged via a Mg-dependent methyl migration to produce 3-hydroxy-3-methyl-2-ketobutyrate (HMKB). In the reductase reaction, this 2-ketoacid undergoes a metal-dependent reduction by NADPH to yield (R)-2,3-dihydroxy-isovalerate. The polypeptide is Ketol-acid reductoisomerase (NADP(+)) (Thermotoga neapolitana (strain ATCC 49049 / DSM 4359 / NBRC 107923 / NS-E)).